Reading from the N-terminus, the 233-residue chain is 27 kDa hemolymph glycoprotein (233 aa).

The N-terminal stretch at Met-1–Ala-17 is a signal peptide. Residues Asn-125 and Asn-156 are each glycosylated (N-linked (GlcNAc...) asparagine).

The protein belongs to the UPF0408 family. N-glycosylated. As to expression, hemolymph.

The protein resides in the secreted. The chain is 27 kDa hemolymph glycoprotein from Manduca sexta (Tobacco hawkmoth).